Here is a 152-residue protein sequence, read N- to C-terminus: Large-conductance mechanosensitive channel (152 aa).

2 helical membrane-spanning segments follow: residues 14–34 and 81–101; these read VIDL…VTSL and GLFL…FIAI.

It belongs to the MscL family. Homopentamer.

It localises to the cell membrane. Its function is as follows. Channel that opens in response to stretch forces in the membrane lipid bilayer. May participate in the regulation of osmotic pressure changes within the cell. In Clostridium perfringens (strain 13 / Type A), this protein is Large-conductance mechanosensitive channel.